We begin with the raw amino-acid sequence, 76 residues long: Neuromacin-like protein (76 aa).

Disulfide bonds link cysteine 18/cysteine 25, cysteine 40/cysteine 44, cysteine 54/cysteine 61, and cysteine 72/cysteine 74.

It belongs to the macin family.

The protein resides in the secreted. This is Neuromacin-like protein from Aplysia californica (California sea hare).